The primary structure comprises 203 residues: Guanylate kinase (203 aa).

The region spanning 3 to 181 is the Guanylate kinase-like domain; the sequence is GTLYVVSAPS…TLADLQAIFT (179 aa). 10–17 lines the ATP pocket; that stretch reads APSGAGKT.

Belongs to the guanylate kinase family.

It is found in the cytoplasm. It carries out the reaction GMP + ATP = GDP + ADP. Essential for recycling GMP and indirectly, cGMP. This chain is Guanylate kinase, found in Alkalilimnicola ehrlichii (strain ATCC BAA-1101 / DSM 17681 / MLHE-1).